The sequence spans 420 residues: Amino acid decarboxylase lolD1 (420 aa).

K62 carries the N6-(pyridoxal phosphate)lysine modification. Pyridoxal 5'-phosphate-binding positions include S194, G231, and E266–T269. I315–V316 contributes to the substrate binding site. C351 serves as the catalytic Proton donor; shared with dimeric partner. C351 carries the S-nitrosocysteine modification. D352 contacts substrate. A pyridoxal 5'-phosphate-binding site is contributed by Y381.

It belongs to the Orn/Lys/Arg decarboxylase class-II family. In terms of assembly, homodimer. It depends on pyridoxal 5'-phosphate as a cofactor.

It participates in alkaloid biosynthesis. Its function is as follows. Amino acid decarboxylase; part of the gene cluster that mediates the biosynthesis of loline alkaloids, potent insecticidal agents composed of a pyrrolizidine ring system and an uncommon ether bridge linking carbons 2 and 7. Lolines are structurally differentiated by the various modifications of the L-amino group and include norloline, loline, N-methylloline, N-acetylloline, N-acetylnorloline, and N-formylloline. The first committed step is the condensation of O-acetyl-L-homoserine (derived from L-aspartic acid) and L-proline, probably catalyzed by the gamma-type pyridoxal 5'-phosphate(PLP)-dependent enzyme lolC, to give the diamino diacid, NACPP. Ensuing cyclization, decarboxylation, and acetylation steps yield 1-exo-acetamidopyrrolizidine (AcAP). LolO is required for installation of the ether bridge upon the pathway intermediate, 1-exo-acetamidopyrrolizidine (AcAP). In sequential 2-oxoglutarate- and O(2)-consuming steps, lolO removes hydrogens from C2 and C7 of AcAP to form both carbon-oxygen bonds in N-acetylnorloline (NANL), the precursor to all other lolines. The enzymes lolD, lolE, lolF and lolT have also been proposed to be involved in the ether-bridge installation. Further processing of the exocyclic moiety of NANL by fungal N-acetamidase (LolN), methyltransferase (LolM), and cytochrome P450 (LolP) enzymes, with occasional involvement of a plant acetyltransferase, generates the other known lolines. LolN transforms NANL to norlonine which is monomethylated and dimethylated to respectively lonine and N-methyllonine (NML) by lolM. LolP catalyzes hydroxylation of the methyl group in N-methylloline (NML) and further oxygenation to N-formylloline (NFL). A plant acetyltransferase is responsible for the acetylation of loline to form N-acetylloline (NAL). LolA might interact with aspartate kinase to prevent feedback inhibition of its activity by these end products and thereby promote production of L-homoserine from L-aspartate. The protein is Amino acid decarboxylase lolD1 of Epichloe uncinata (Endophyte fungus).